A 359-amino-acid polypeptide reads, in one-letter code: E3 ubiquitin-protein ligase RNF146 (359 aa).

The RING-type zinc finger occupies 36–74 (CAICLQTCVHPVSLPCKHVFCYLCVKGASWLGKRCALCR). Residues Lys84 and Lys94 each participate in a glycyl lysine isopeptide (Lys-Gly) (interchain with G-Cter in ubiquitin) cross-link. The 77-residue stretch at 91-167 (EELKAASRGN…EHGRRRKIKR (77 aa)) folds into the WWE domain. A glycoprotein contacts are provided by Tyr107, Arg110, and Trp114. Lys130 participates in a covalent cross-link: Glycyl lysine isopeptide (Lys-Gly) (interchain with G-Cter in ubiquitin). Tyr144, Gln153, Arg163, and Lys175 together coordinate a glycoprotein. A Glycyl lysine isopeptide (Lys-Gly) (interchain with G-Cter in ubiquitin) cross-link involves residue Lys175. The interval 259 to 359 (ERSHRGEGEE…PDGQCTVTEV (101 aa)) is disordered. Over residues 284 to 298 (SVEETESDASSDSED) the composition is skewed to acidic residues. Phosphoserine occurs at positions 290 and 294. Residues 306–322 (HSLTQQRLLVPNANQTV) show a composition bias toward polar residues.

Can form homooligomers. Interacts with PARsylated AXIN1, AXIN2, BLZF1, CASC3, H1-2, IPO7, LIG3, NCL, PARP1, XRCC1, XRCC5 and XRCC6. Interacts with DDB1, DHX15, IQGAP1, LRPPRC, PARP2, PRKDC, RUVBL2, TNKS1 and TNKS2. Binding often leads to interactor ubiquitination, in the presence of the appropriate E1 and E2 enzymes, and proteasomal degradation. In terms of processing, ubiquitinated; autoubiquitinated. Autoubiquitination is enhanced upon poly(ADP-ribose)-binding.

It is found in the cytoplasm. Its subcellular location is the cytosol. The protein localises to the nucleus. The catalysed reaction is S-ubiquitinyl-[E2 ubiquitin-conjugating enzyme]-L-cysteine + [acceptor protein]-L-lysine = [E2 ubiquitin-conjugating enzyme]-L-cysteine + N(6)-ubiquitinyl-[acceptor protein]-L-lysine.. Its pathway is protein modification; protein ubiquitination. In terms of biological role, E3 ubiquitin-protein ligase that specifically binds poly-ADP-ribosylated (PARsylated) proteins and mediates their ubiquitination and subsequent degradation. May regulate many important biological processes, such as cell survival and DNA damage response. Acts as an activator of the Wnt signaling pathway by mediating the ubiquitination of PARsylated AXIN1 and AXIN2, 2 key components of the beta-catenin destruction complex. Acts in cooperation with tankyrase proteins (TNKS and TNKS2), which mediate PARsylation of target proteins AXIN1, AXIN2, BLZF1, CASC3, TNKS and TNKS2. Recognizes and binds tankyrase-dependent PARsylated proteins via its WWE domain and mediates their ubiquitination, leading to their degradation. Different ubiquitin linkage types have been observed: TNKS2 undergoes ubiquitination at 'Lys-48' and 'Lys-63', while AXIN1 is only ubiquitinated at 'Lys-48'. May regulate TNKS and TNKS2 subcellular location, preventing aggregation at a centrosomal location. Neuroprotective protein. Protects the brain against N-methyl-D-aspartate (NMDA) receptor-mediated glutamate excitotoxicity and ischemia, by interfering with PAR-induced cell death, called parthanatos. Prevents nuclear translocation of AIFM1 in a PAR-binding dependent manner. Does not affect PARP1 activation. Protects against cell death induced by DNA damaging agents, such as N-methyl-N-nitro-N-nitrosoguanidine (MNNG) and rescues cells from G1 arrest. Promotes cell survival after gamma-irradiation. Facilitates DNA repair. The sequence is that of E3 ubiquitin-protein ligase RNF146 (RNF146) from Ailuropoda melanoleuca (Giant panda).